The sequence spans 326 residues: 2-dehydropantoate 2-reductase (326 aa).

Residues 7-12 and Asn103 each bind NADP(+); that span reads GAGAIG. Asn103 is a substrate binding site. Residue Lys205 is the Proton donor of the active site. Substrate is bound by residues Asn209, Asn213, and Ser274. Glu286 contributes to the NADP(+) binding site.

The protein belongs to the ketopantoate reductase family.

The protein resides in the cytoplasm. It carries out the reaction (R)-pantoate + NADP(+) = 2-dehydropantoate + NADPH + H(+). It participates in cofactor biosynthesis; (R)-pantothenate biosynthesis; (R)-pantoate from 3-methyl-2-oxobutanoate: step 2/2. Catalyzes the NADPH-dependent reduction of ketopantoate into pantoic acid. The polypeptide is 2-dehydropantoate 2-reductase (Mesorhizobium japonicum (strain LMG 29417 / CECT 9101 / MAFF 303099) (Mesorhizobium loti (strain MAFF 303099))).